The following is a 91-amino-acid chain: Small ribosomal subunit protein uS19 (91 aa).

This sequence belongs to the universal ribosomal protein uS19 family.

Functionally, protein S19 forms a complex with S13 that binds strongly to the 16S ribosomal RNA. This Parasynechococcus marenigrum (strain WH8102) protein is Small ribosomal subunit protein uS19.